The sequence spans 331 residues: Phenylalanine--tRNA ligase alpha subunit (331 aa).

Glutamate 252 contacts Mg(2+).

This sequence belongs to the class-II aminoacyl-tRNA synthetase family. Phe-tRNA synthetase alpha subunit type 1 subfamily. In terms of assembly, tetramer of two alpha and two beta subunits. The cofactor is Mg(2+).

It is found in the cytoplasm. The enzyme catalyses tRNA(Phe) + L-phenylalanine + ATP = L-phenylalanyl-tRNA(Phe) + AMP + diphosphate + H(+). The sequence is that of Phenylalanine--tRNA ligase alpha subunit from Xanthomonas oryzae pv. oryzae (strain MAFF 311018).